Here is a 105-residue protein sequence, read N- to C-terminus: Small ribosomal subunit protein uS14m (105 aa).

Belongs to the universal ribosomal protein uS14 family. Component of the mitochondrial small ribosomal subunit (mt-SSU). Mature yeast 74S mitochondrial ribosomes consist of a small (37S) and a large (54S) subunit. The 37S small subunit contains a 15S ribosomal RNA (15S mt-rRNA) and at least 32 different proteins. The 54S large subunit contains a 21S rRNA (21S mt-rRNA) and at least 45 different proteins.

Its subcellular location is the mitochondrion. In terms of biological role, component of the mitochondrial ribosome (mitoribosome), a dedicated translation machinery responsible for the synthesis of mitochondrial genome-encoded proteins, including at least some of the essential transmembrane subunits of the mitochondrial respiratory chain. The mitoribosomes are attached to the mitochondrial inner membrane and translation products are cotranslationally integrated into the membrane. The protein is Small ribosomal subunit protein uS14m (mrp2) of Schizosaccharomyces pombe (strain 972 / ATCC 24843) (Fission yeast).